Reading from the N-terminus, the 210-residue chain is Small ribosomal subunit protein uS4 (210 aa).

The region spanning 99–161 (RRLDSVIYRM…SKNNATILSA (63 aa)) is the S4 RNA-binding domain.

This sequence belongs to the universal ribosomal protein uS4 family. Part of the 30S ribosomal subunit. Contacts protein S5. The interaction surface between S4 and S5 is involved in control of translational fidelity.

One of the primary rRNA binding proteins, it binds directly to 16S rRNA where it nucleates assembly of the body of the 30S subunit. Its function is as follows. With S5 and S12 plays an important role in translational accuracy. In Solibacter usitatus (strain Ellin6076), this protein is Small ribosomal subunit protein uS4.